A 720-amino-acid polypeptide reads, in one-letter code: Ciliated left-right organizer metallopeptidase (720 aa).

Positions 1–25 are cleaved as a signal peptide; that stretch reads MTVSFSMFQIYRLVWLSFMTSMCLS. Topologically, residues 26–668 are extracellular; it reads ACIHDSVLQE…ALYVSHMLYS (643 aa). Zn(2+) is bound at residue His-243. Glu-244 is an active-site residue. The Zn(2+) site is built by His-247 and His-322. Residues 669-689 traverse the membrane as a helical segment; that stretch reads YVIGGGCCAVCGAAIIFALFW. At 690 to 720 the chain is on the cytoplasmic side; sequence YKLRRQFLRVGSSYPPETSNHERPQIPADLV.

This sequence belongs to the peptidase M8 family. Zn(2+) is required as a cofactor.

Its subcellular location is the membrane. Functionally, putative metalloprotease playing a role in the process of LR patterning. This chain is Ciliated left-right organizer metallopeptidase (cirop), found in Xenopus laevis (African clawed frog).